A 186-amino-acid chain; its full sequence is Large ribosomal subunit protein uL5 (186 aa).

The protein belongs to the universal ribosomal protein uL5 family. Part of the 50S ribosomal subunit; part of the 5S rRNA/L5/L18/L25 subcomplex. Contacts the 5S rRNA and the P site tRNA. Forms a bridge to the 30S subunit in the 70S ribosome.

Its function is as follows. This is one of the proteins that bind and probably mediate the attachment of the 5S RNA into the large ribosomal subunit, where it forms part of the central protuberance. In the 70S ribosome it contacts protein S13 of the 30S subunit (bridge B1b), connecting the 2 subunits; this bridge is implicated in subunit movement. Contacts the P site tRNA; the 5S rRNA and some of its associated proteins might help stabilize positioning of ribosome-bound tRNAs. In Cereibacter sphaeroides (strain ATCC 17023 / DSM 158 / JCM 6121 / CCUG 31486 / LMG 2827 / NBRC 12203 / NCIMB 8253 / ATH 2.4.1.) (Rhodobacter sphaeroides), this protein is Large ribosomal subunit protein uL5.